The sequence spans 115 residues: Large ribosomal subunit protein P2y (115 aa).

The tract at residues A63–E115 is disordered. Residues E92–K102 show a composition bias toward basic and acidic residues. A Phosphoserine modification is found at S105.

It belongs to the eukaryotic ribosomal protein P1/P2 family. As to quaternary structure, P1 and P2 exist as dimers at the large ribosomal subunit. Phosphorylated.

Its function is as follows. Plays an important role in the elongation step of protein synthesis. The chain is Large ribosomal subunit protein P2y (RPP2B) from Arabidopsis thaliana (Mouse-ear cress).